Consider the following 182-residue polypeptide: UPF0149 protein PM1723 (182 aa).

The protein belongs to the UPF0149 family.

The sequence is that of UPF0149 protein PM1723 from Pasteurella multocida (strain Pm70).